Here is a 354-residue protein sequence, read N- to C-terminus: MHRNILMVLIANVVLGTLIVLSSHHWFTLWVGLEMNTLSILPILSYQFTPRNVESSVKYFLVQSVSAGIVLNVVIIQAWLYSSWSLMEPLNQATSFLMTLALGLKLGLFPCHYWFPDVIQGVGFIQGLVLSTWQKIAPFAVLVYVVESLNISLLASLGVLSVLVGGWGGLNQTQMRKIFAFSSIAHIGWICSTVGYSVSVACVMLVAYIIINSSVFFMANSFDLKSLSHVGRLSLYNFVGGAGLVLSILSLGGLPPLFGFLIKFISLKCLVENGCFILAGVLVMGSLLSLFFYLRIAFNSSLTLFPQHSLVVFSWRSNRNQTGGFTSEGVLLSVSFGISSLGLVCLPVFISLLN.

The next 10 membrane-spanning stretches (helical) occupy residues 5–25 (ILMV…SSHH), 26–46 (WFTL…ILSY), 60–80 (FLVQ…QAWL), 96–116 (FLMT…YWFP), 122–142 (VGFI…FAVL), 149–169 (LNIS…GWGG), 198–218 (VSVA…VFFM), 242–262 (AGLV…GFLI), 274–294 (GCFI…FFYL), and 330–350 (VLLS…PVFI).

This sequence belongs to the complex I subunit 2 family.

The protein localises to the mitochondrion inner membrane. The catalysed reaction is a ubiquinone + NADH + 5 H(+)(in) = a ubiquinol + NAD(+) + 4 H(+)(out). Its function is as follows. Core subunit of the mitochondrial membrane respiratory chain NADH dehydrogenase (Complex I) that is believed to belong to the minimal assembly required for catalysis. Complex I functions in the transfer of electrons from NADH to the respiratory chain. The immediate electron acceptor for the enzyme is believed to be ubiquinone. In Patiria pectinifera (Starfish), this protein is NADH-ubiquinone oxidoreductase chain 2 (ND2).